We begin with the raw amino-acid sequence, 241 residues long: 3-oxoacyl-[acyl-carrier-protein] reductase FabG (241 aa).

NADP(+)-binding positions include 13–16 (GASS), Ser-38, 57–58 (EV), and Asn-83. Ser-135 contributes to the substrate binding site. Tyr-148 (proton acceptor) is an active-site residue. NADP(+) contacts are provided by residues 148 to 152 (YCASK) and Ile-181.

It belongs to the short-chain dehydrogenases/reductases (SDR) family. Homotetramer.

It carries out the reaction a (3R)-hydroxyacyl-[ACP] + NADP(+) = a 3-oxoacyl-[ACP] + NADPH + H(+). Its pathway is lipid metabolism; fatty acid biosynthesis. Functionally, catalyzes the NADPH-dependent reduction of beta-ketoacyl-ACP substrates to beta-hydroxyacyl-ACP products, the first reductive step in the elongation cycle of fatty acid biosynthesis. This chain is 3-oxoacyl-[acyl-carrier-protein] reductase FabG (fabG), found in Rickettsia prowazekii (strain Madrid E).